A 254-amino-acid chain; its full sequence is Nickel import ATP-binding protein NikD (254 aa).

The ABC transporter domain occupies 2–241 (PQQIELRNIA…PKHAVTRSLV (240 aa)). 36 to 43 (GGSGSGKS) lines the ATP pocket.

The protein belongs to the ABC transporter superfamily. Nickel importer (TC 3.A.1.5.3) family. The complex is composed of two ATP-binding proteins (NikD and NikE), two transmembrane proteins (NikB and NikC) and a solute-binding protein (NikA).

The protein resides in the cell inner membrane. It carries out the reaction Ni(2+)(out) + ATP + H2O = Ni(2+)(in) + ADP + phosphate + H(+). Part of the ABC transporter complex NikABCDE involved in nickel import. Responsible for energy coupling to the transport system. This is Nickel import ATP-binding protein NikD from Shigella sonnei (strain Ss046).